We begin with the raw amino-acid sequence, 901 residues long: Alpha-actinin-3 (901 aa).

Methionine 1 is modified (N-acetylmethionine). The actin-binding stretch occupies residues 1 to 261 (MMMVLQPEGL…IMTYVSCFYH (261 aa)). 2 Calponin-homology (CH) domains span residues 45–149 (KQQR…LRFA) and 158–264 (TSAK…HAFA). 4 Spectrin repeats span residues 288–398 (KLME…WLLS), 408–513 (HLAE…ALER), 523–634 (QLQL…MLQE), and 644–747 (RLRR…EVEN). EF-hand domains lie at 760–795 (EQLNEFRASFNHFDRKRNGMMEPDDFRACLISMGYD) and 796–831 (LGEVEFARIMTMVDPNAAGVVTFQAFIDFMTRETAE). The Ca(2+) site is built by aspartate 773, asparagine 777, methionine 779, aspartate 784, aspartate 809, and asparagine 811.

This sequence belongs to the alpha-actinin family. Homodimer; antiparallel. Also forms heterodimers with ACTN2. Interacts with MYOZ1.

Its function is as follows. F-actin cross-linking protein which is thought to anchor actin to a variety of intracellular structures. This is a bundling protein. This Bos taurus (Bovine) protein is Alpha-actinin-3 (ACTN3).